Consider the following 321-residue polypeptide: Putative ribose-phosphate pyrophosphokinase 2 (321 aa).

ATP-binding positions include 43-45 (DGE) and 102-103 (RQ). Positions 136 and 176 each coordinate Mg(2+). Asp-225 contributes to the D-ribose 5-phosphate binding site.

Belongs to the ribose-phosphate pyrophosphokinase family. Class I subfamily. In terms of assembly, homohexamer. The cofactor is Mg(2+).

The protein localises to the cytoplasm. The enzyme catalyses D-ribose 5-phosphate + ATP = 5-phospho-alpha-D-ribose 1-diphosphate + AMP + H(+). Its pathway is metabolic intermediate biosynthesis; 5-phospho-alpha-D-ribose 1-diphosphate biosynthesis; 5-phospho-alpha-D-ribose 1-diphosphate from D-ribose 5-phosphate (route I): step 1/1. Its function is as follows. Involved in the biosynthesis of the central metabolite phospho-alpha-D-ribosyl-1-pyrophosphate (PRPP) via the transfer of pyrophosphoryl group from ATP to 1-hydroxyl of ribose-5-phosphate (Rib-5-P). The sequence is that of Putative ribose-phosphate pyrophosphokinase 2 from Lactiplantibacillus plantarum (strain ATCC BAA-793 / NCIMB 8826 / WCFS1) (Lactobacillus plantarum).